The chain runs to 1793 residues: Chitin synthase 5 (1793 aa).

A disordered region spans residues 1-28 (MTNPRMSMYSLASEAPGGNRGTGQQSTQ). Asn-70, Asn-164, Asn-638, Asn-664, and Asn-669 each carry an N-linked (GlcNAc...) asparagine glycan. 2 helical membrane-spanning segments follow: residues 750 to 770 (VWVF…LRYV) and 786 to 806 (LVLC…IVAF). The Cytochrome b5 heme-binding domain occupies 815–877 (DKAYSQKEVD…GMNLDDYFVA (63 aa)). N-linked (GlcNAc...) asparagine glycosylation is found at Asn-897, Asn-1019, and Asn-1023. The helical transmembrane segment at 1056-1076 (LLLAFSIMLCAVILLKFVSAL) threads the bilayer. Asn-1421 carries N-linked (GlcNAc...) asparagine glycosylation. Transmembrane regions (helical) follow at residues 1452–1472 (LFGT…IYLV), 1479–1499 (FPLI…LIFI), and 1507–1527 (IGWM…LPIY). 2 N-linked (GlcNAc...) asparagine glycosylation sites follow: Asn-1534 and Asn-1705. The DEK-C domain maps to 1735–1791 (GPDDGMIVEAIRTVLMEVDLDTVTKKQVRALVEQRLQSELVGERRTFMDRQIDHELA).

The protein belongs to the chitin synthase family. Class V subfamily.

The protein localises to the cell membrane. The enzyme catalyses [(1-&gt;4)-N-acetyl-beta-D-glucosaminyl](n) + UDP-N-acetyl-alpha-D-glucosamine = [(1-&gt;4)-N-acetyl-beta-D-glucosaminyl](n+1) + UDP + H(+). Polymerizes chitin, a structural polymer of the cell wall and septum, by transferring the sugar moiety of UDP-GlcNAc to the non-reducing end of the growing chitin polymer. Regulates Germination and Tolerance to Hyperosmotic Stress. Plays a key role in pathogenicity. Likely contributes to post-penetration virulence. This chain is Chitin synthase 5, found in Verticillium dahliae (strain VdLs.17 / ATCC MYA-4575 / FGSC 10137) (Verticillium wilt).